The following is a 316-amino-acid chain: Adenine deaminase (316 aa).

His14, His16, and His194 together coordinate Zn(2+). Catalysis depends on Glu197, which acts as the Proton donor. A Zn(2+)-binding site is contributed by Asp275. Position 276 (Asp276) interacts with substrate.

It belongs to the metallo-dependent hydrolases superfamily. Adenosine and AMP deaminases family. Adenine deaminase type 2 subfamily. Zn(2+) is required as a cofactor.

The catalysed reaction is adenine + H2O + H(+) = hypoxanthine + NH4(+). Catalyzes the hydrolytic deamination of adenine to hypoxanthine. Plays an important role in the purine salvage pathway and in nitrogen catabolism. This Pseudomonas entomophila (strain L48) protein is Adenine deaminase.